Consider the following 225-residue polypeptide: Biosynthetic peptidoglycan transglycosylase (225 aa).

Residues 7–27 form a helical membrane-spanning segment; the sequence is SFLFKMVLILLIAPIVLVGVV.

The protein belongs to the glycosyltransferase 51 family.

It is found in the cell inner membrane. The catalysed reaction is [GlcNAc-(1-&gt;4)-Mur2Ac(oyl-L-Ala-gamma-D-Glu-L-Lys-D-Ala-D-Ala)](n)-di-trans,octa-cis-undecaprenyl diphosphate + beta-D-GlcNAc-(1-&gt;4)-Mur2Ac(oyl-L-Ala-gamma-D-Glu-L-Lys-D-Ala-D-Ala)-di-trans,octa-cis-undecaprenyl diphosphate = [GlcNAc-(1-&gt;4)-Mur2Ac(oyl-L-Ala-gamma-D-Glu-L-Lys-D-Ala-D-Ala)](n+1)-di-trans,octa-cis-undecaprenyl diphosphate + di-trans,octa-cis-undecaprenyl diphosphate + H(+). It functions in the pathway cell wall biogenesis; peptidoglycan biosynthesis. Its function is as follows. Peptidoglycan polymerase that catalyzes glycan chain elongation from lipid-linked precursors. The protein is Biosynthetic peptidoglycan transglycosylase of Vibrio parahaemolyticus serotype O3:K6 (strain RIMD 2210633).